A 240-amino-acid polypeptide reads, in one-letter code: Triosephosphate isomerase (240 aa).

8 to 10 (NWK) is a substrate binding site. The active-site Electrophile is histidine 93. The active-site Proton acceptor is glutamate 160. Residue glycine 166 coordinates substrate.

The protein belongs to the triosephosphate isomerase family. As to quaternary structure, homodimer.

Its subcellular location is the cytoplasm. It carries out the reaction D-glyceraldehyde 3-phosphate = dihydroxyacetone phosphate. It functions in the pathway carbohydrate biosynthesis; gluconeogenesis. Its pathway is carbohydrate degradation; glycolysis; D-glyceraldehyde 3-phosphate from glycerone phosphate: step 1/1. In terms of biological role, involved in the gluconeogenesis. Catalyzes stereospecifically the conversion of dihydroxyacetone phosphate (DHAP) to D-glyceraldehyde-3-phosphate (G3P). This is Triosephosphate isomerase from Ehrlichia chaffeensis (strain ATCC CRL-10679 / Arkansas).